The sequence spans 234 residues: Ubiquinone biosynthesis O-methyltransferase (234 aa).

Residues Arg39, Gly59, Asp80, and Met124 each coordinate S-adenosyl-L-methionine.

It belongs to the methyltransferase superfamily. UbiG/COQ3 family.

The enzyme catalyses a 3-demethylubiquinol + S-adenosyl-L-methionine = a ubiquinol + S-adenosyl-L-homocysteine + H(+). It catalyses the reaction a 3-(all-trans-polyprenyl)benzene-1,2-diol + S-adenosyl-L-methionine = a 2-methoxy-6-(all-trans-polyprenyl)phenol + S-adenosyl-L-homocysteine + H(+). It participates in cofactor biosynthesis; ubiquinone biosynthesis. Functionally, O-methyltransferase that catalyzes the 2 O-methylation steps in the ubiquinone biosynthetic pathway. The polypeptide is Ubiquinone biosynthesis O-methyltransferase (Aliivibrio fischeri (strain MJ11) (Vibrio fischeri)).